Here is an 879-residue protein sequence, read N- to C-terminus: Protein P (879 aa).

The tract at residues 1–184 (MHPFSRLFRN…GKPYSWEHRQ (184 aa)) is terminal protein domain (TP). Residues 185-382 (LVQHNGQQHK…YCIHHIVSSI (198 aa)) are spacer. Positions 304-345 (SASNSNKSRSREKAYSSNSTSKRYSPPLNYEKSDFSSPGVRG) are disordered. The polymerase/reverse transcriptase domain (RT) stretch occupies residues 383 to 724 (DDWGPCTVTG…YEELWPVVRQ (342 aa)). Positions 393–634 (DVTIKSPRTP…NHLHFMGYVI (242 aa)) constitute a Reverse transcriptase domain. Mg(2+)-binding residues include Asp-465, Asp-585, and Asp-586.

Belongs to the hepadnaviridae P protein family.

It catalyses the reaction DNA(n) + a 2'-deoxyribonucleoside 5'-triphosphate = DNA(n+1) + diphosphate. The catalysed reaction is Endonucleolytic cleavage to 5'-phosphomonoester.. Activated by host HSP70 and HSP40 in vitro to be able to bind the epsilon loop of the pgRNA. Because deletion of the RNase H region renders the protein partly chaperone-independent, the chaperones may be needed indirectly to relieve occlusion of the RNA-binding site by this domain. Inhibited by several reverse-transcriptase inhibitors: Lamivudine, Adefovir and Entecavir. Functionally, multifunctional enzyme that converts the viral RNA genome into dsDNA in viral cytoplasmic capsids. This enzyme displays a DNA polymerase activity that can copy either DNA or RNA templates, and a ribonuclease H (RNase H) activity that cleaves the RNA strand of RNA-DNA heteroduplexes in a partially processive 3'- to 5'-endonucleasic mode. Neo-synthesized pregenomic RNA (pgRNA) are encapsidated together with the P protein, and reverse-transcribed inside the nucleocapsid. Initiation of reverse-transcription occurs first by binding the epsilon loop on the pgRNA genome, and is initiated by protein priming, thereby the 5'-end of (-)DNA is covalently linked to P protein. Partial (+)DNA is synthesized from the (-)DNA template and generates the relaxed circular DNA (RC-DNA) genome. After budding and infection, the RC-DNA migrates in the nucleus, and is converted into a plasmid-like covalently closed circular DNA (cccDNA). The activity of P protein does not seem to be necessary for cccDNA generation, and is presumably released from (+)DNA by host nuclear DNA repair machinery. The chain is Protein P from Woodchuck hepatitis B virus (isolate 1) (WHV).